The chain runs to 333 residues: 1D-myo-inositol 2-acetamido-2-deoxy-alpha-D-glucopyranoside deacetylase (333 aa).

3 residues coordinate Zn(2+): histidine 18, aspartate 21, and histidine 165.

The protein belongs to the MshB deacetylase family. It depends on Zn(2+) as a cofactor.

It catalyses the reaction 1D-myo-inositol 2-acetamido-2-deoxy-alpha-D-glucopyranoside + H2O = 1D-myo-inositol 2-amino-2-deoxy-alpha-D-glucopyranoside + acetate. In terms of biological role, catalyzes the deacetylation of 1D-myo-inositol 2-acetamido-2-deoxy-alpha-D-glucopyranoside (GlcNAc-Ins) in the mycothiol biosynthesis pathway. The protein is 1D-myo-inositol 2-acetamido-2-deoxy-alpha-D-glucopyranoside deacetylase of Corynebacterium jeikeium (strain K411).